The sequence spans 1293 residues: Galactose/N-acetyl-D-galactosamine lectin heavy subunit 1 (1293 aa).

An N-terminal signal peptide occupies residues 1–15 (MKLLLLNILLLCCLA). Topologically, residues 16-1234 (DKLNEFSADI…NNVGAIAAAT (1219 aa)) are extracellular. Residues Asn-95, Asn-198, Asn-234, Asn-261, Asn-337, Asn-377, Asn-390, Asn-468, Asn-487, Asn-643, Asn-659, Asn-890, Asn-992, Asn-1138, Asn-1204, and Asn-1214 are each glycosylated (N-linked (GlcNAc...) asparagine). Residues 1235–1255 (TVAVVVVAVVVALIVVSIGLF) form a helical membrane-spanning segment. At 1256–1293 (KTYQLVSSAMKNAITITNENAEYVGADNEATNAATFNG) the chain is on the cytoplasmic side.

In terms of assembly, heterodimer composed of a 170 kDa heavy subunit (hgl) and a 31/35 kDa light subunit (lgl); disulfide-linked. Post-translationally, N-glycosylated.

It localises to the cell membrane. Its function is as follows. Lectin which binds galactose and N-acetyl-D-galactosamine of host glycoproteins and thus mediates adhesion to host cells. Mediates adherence to host colonic mucins, an essential step for pathogenic tissue invasion. The sequence is that of Galactose/N-acetyl-D-galactosamine lectin heavy subunit 1 from Entamoeba histolytica (strain ATCC 30459 / HM-1:IMSS / ABRM).